The sequence spans 429 residues: Adenylosuccinate synthetase (429 aa).

Residues 12–18 (GDEGKGK) and 40–42 (GHT) each bind GTP. Aspartate 13 serves as the catalytic Proton acceptor. Mg(2+) contacts are provided by aspartate 13 and glycine 40. IMP is bound by residues 13-16 (DEGK), 38-41 (NAGH), threonine 129, arginine 143, glutamine 224, threonine 239, and arginine 303. Histidine 41 serves as the catalytic Proton donor. 299 to 305 (ATTGRRR) is a binding site for substrate. GTP contacts are provided by residues arginine 305, 331 to 333 (KLD), and 413 to 415 (SVG).

Belongs to the adenylosuccinate synthetase family. Homodimer. Mg(2+) is required as a cofactor.

It is found in the cytoplasm. The enzyme catalyses IMP + L-aspartate + GTP = N(6)-(1,2-dicarboxyethyl)-AMP + GDP + phosphate + 2 H(+). It functions in the pathway purine metabolism; AMP biosynthesis via de novo pathway; AMP from IMP: step 1/2. In terms of biological role, plays an important role in the de novo pathway of purine nucleotide biosynthesis. Catalyzes the first committed step in the biosynthesis of AMP from IMP. This chain is Adenylosuccinate synthetase, found in Desulforapulum autotrophicum (strain ATCC 43914 / DSM 3382 / VKM B-1955 / HRM2) (Desulfobacterium autotrophicum).